The sequence spans 328 residues: H-2 class I histocompatibility antigen, K-Q alpha chain (328 aa).

The segment at 1–71 (PRFISVGYVD…LLRYYNQSAG (71 aa)) is alpha-1. At 1–265 (PRFISVGYVD…EPPPSAVSNT (265 aa)) the chain is on the extracellular side. Asparagine 67 is a glycosylation site (N-linked (GlcNAc...) asparagine). Positions 72–163 (GSHTIQRMYG…KNGNATLLRT (92 aa)) are alpha-2. Cysteine 82 and cysteine 145 are joined by a disulfide. Residue asparagine 157 is glycosylated (N-linked (GlcNAc...) asparagine). The interval 164-255 (DSPKAHVTHH…GLPKPLTLRW (92 aa)) is alpha-3. In terms of domain architecture, Ig-like C1-type spans 166-252 (PKAHVTHHSR…YHQGLPKPLT (87 aa)). Cysteines 184 and 240 form a disulfide. Positions 256 to 265 (EPPPSAVSNT) are connecting peptide. A helical transmembrane segment spans residues 266–289 (VIIAVLVVLGAAIVTGAVVAFVMM). The Cytoplasmic segment spans residues 290–328 (RRRNTGGKGGDYALAPGSQTSDLSLPDCKVMVHDPHSLA). 2 positions are modified to phosphoserine: serine 310 and serine 313.

It belongs to the MHC class I family. As to quaternary structure, heterodimer of an alpha chain and a beta chain (beta-2-microglobulin).

Its subcellular location is the membrane. Involved in the presentation of foreign antigens to the immune system. This chain is H-2 class I histocompatibility antigen, K-Q alpha chain (H2-K1), found in Mus musculus (Mouse).